The sequence spans 301 residues: Cytidine deaminase 1 (301 aa).

CMP/dCMP-type deaminase domains follow at residues 23–156 and 188–301; these read SVIQ…FGPD and DSSA…CYEA. Residue 64–66 participates in substrate binding; it reads NVE. Residue histidine 77 participates in Zn(2+) binding. Glutamate 79 (proton donor) is an active-site residue. Zn(2+) contacts are provided by cysteine 104 and cysteine 107.

This sequence belongs to the cytidine and deoxycytidylate deaminase family. As to quaternary structure, homodimer. Requires Zn(2+) as cofactor. Expressed in roots, rosette leaves, stems and flowers.

It catalyses the reaction cytidine + H2O + H(+) = uridine + NH4(+). It carries out the reaction 2'-deoxycytidine + H2O + H(+) = 2'-deoxyuridine + NH4(+). Inhibited by uridine, CMP and dCMP. This enzyme scavenges exogenous and endogenous cytidine and 2'-deoxycytidine for UMP synthesis. Functions as a conventional cytidine deaminase. Has no affinity for RNA and is not involved in RNA-editing by C-to-U deamination. The polypeptide is Cytidine deaminase 1 (CDA1) (Arabidopsis thaliana (Mouse-ear cress)).